We begin with the raw amino-acid sequence, 322 residues long: Phosphatidylserine decarboxylase proenzyme (322 aa).

Active-site charge relay system; for autoendoproteolytic cleavage activity residues include Asp-90, His-147, and Ser-254. Residue Ser-254 is the Schiff-base intermediate with substrate; via pyruvic acid; for decarboxylase activity of the active site. Residue Ser-254 is modified to Pyruvic acid (Ser); by autocatalysis. Positions 292–322 (TPDAEPSPLPAEEIEAEHDASPLVDDKKDQV) are disordered. Residues 308-322 (EHDASPLVDDKKDQV) are compositionally biased toward basic and acidic residues.

Belongs to the phosphatidylserine decarboxylase family. PSD-B subfamily. Prokaryotic type I sub-subfamily. As to quaternary structure, heterodimer of a large membrane-associated beta subunit and a small pyruvoyl-containing alpha subunit. It depends on pyruvate as a cofactor. In terms of processing, is synthesized initially as an inactive proenzyme. Formation of the active enzyme involves a self-maturation process in which the active site pyruvoyl group is generated from an internal serine residue via an autocatalytic post-translational modification. Two non-identical subunits are generated from the proenzyme in this reaction, and the pyruvate is formed at the N-terminus of the alpha chain, which is derived from the carboxyl end of the proenzyme. The autoendoproteolytic cleavage occurs by a canonical serine protease mechanism, in which the side chain hydroxyl group of the serine supplies its oxygen atom to form the C-terminus of the beta chain, while the remainder of the serine residue undergoes an oxidative deamination to produce ammonia and the pyruvoyl prosthetic group on the alpha chain. During this reaction, the Ser that is part of the protease active site of the proenzyme becomes the pyruvoyl prosthetic group, which constitutes an essential element of the active site of the mature decarboxylase.

The protein localises to the cell membrane. The catalysed reaction is a 1,2-diacyl-sn-glycero-3-phospho-L-serine + H(+) = a 1,2-diacyl-sn-glycero-3-phosphoethanolamine + CO2. It participates in phospholipid metabolism; phosphatidylethanolamine biosynthesis; phosphatidylethanolamine from CDP-diacylglycerol: step 2/2. Catalyzes the formation of phosphatidylethanolamine (PtdEtn) from phosphatidylserine (PtdSer). The sequence is that of Phosphatidylserine decarboxylase proenzyme from Escherichia coli O7:K1 (strain IAI39 / ExPEC).